A 372-amino-acid polypeptide reads, in one-letter code: Ephrin type-A receptor 8 (372 aa).

One can recognise a Protein kinase domain in the interval 2-263 (IHIEKIIGSG…HVVSVLEALV (262 aa)). ATP-binding positions include 8-16 (IGSGESGEV) and K34. The active-site Proton acceptor is D127. Y206 carries the phosphotyrosine; by autocatalysis modification. An SAM domain is found at 297–372 (NGDLTVGDWL…SCTQGPRRHL (76 aa)). A PDZ-binding motif is present at residues 370-372 (RHL).

Heterotetramer upon binding of the ligand. The heterotetramer is composed of an ephrin dimer and a receptor dimer. Oligomerization is probably required to induce biological responses. May also form heterodimers with other ephrin receptors. Interacts with FYN; possible downstream effector of EPHA8 in regulation of cell adhesion. Interacts with PIK3CG; regulates integrin-mediated cell adhesion to substrate. Interacts with TIAM1; regulates clathrin-mediated endocytosis of EPHA8. Interacts with ANKS1A and ANKS1B; EPHA8 kinase activity-independent but stimulated by EPHA8 ubiquitination. Phosphorylated. Phosphorylation is stimulated upon binding of its ligands including EFNA2, EFNA3 and EFNA5. Autophosphorylation on Tyr-206 modulates tyrosine kinase activity. In terms of processing, ubiquitinated. Ubiquitination by CBL regulates the receptor stability and activity through proteasomal degradation. ANKS1A prevents ubiquitination and degradation. In terms of tissue distribution, most abundant in brain.

It is found in the cell membrane. It localises to the cell projection. The protein resides in the early endosome membrane. It catalyses the reaction L-tyrosyl-[protein] + ATP = O-phospho-L-tyrosyl-[protein] + ADP + H(+). Receptor tyrosine kinase which binds promiscuously GPI-anchored ephrin-A family ligands residing on adjacent cells, leading to contact-dependent bidirectional signaling into neighboring cells. The signaling pathway downstream of the receptor is referred to as forward signaling while the signaling pathway downstream of the ephrin ligand is referred to as reverse signaling. The GPI-anchored ephrin-A EFNA2, EFNA3, and EFNA5 are able to activate EPHA8 through phosphorylation. With EFNA5 may regulate integrin-mediated cell adhesion and migration on fibronectin substrate but also neurite outgrowth. During development of the nervous system also plays a role in axon guidance. Downstream effectors of the EPHA8 signaling pathway include FYN which promotes cell adhesion upon activation by EPHA8 and the MAP kinases in the stimulation of neurite outgrowth. The protein is Ephrin type-A receptor 8 (Epha8) of Rattus norvegicus (Rat).